Consider the following 311-residue polypeptide: Ribosomal RNA small subunit methyltransferase H (311 aa).

Residues 33–35 (GGH), D53, F77, D98, and Q105 each bind S-adenosyl-L-methionine.

This sequence belongs to the methyltransferase superfamily. RsmH family.

The protein resides in the cytoplasm. It carries out the reaction cytidine(1402) in 16S rRNA + S-adenosyl-L-methionine = N(4)-methylcytidine(1402) in 16S rRNA + S-adenosyl-L-homocysteine + H(+). Functionally, specifically methylates the N4 position of cytidine in position 1402 (C1402) of 16S rRNA. This is Ribosomal RNA small subunit methyltransferase H from Thiobacillus denitrificans (strain ATCC 25259 / T1).